We begin with the raw amino-acid sequence, 844 residues long: Probable serine/threonine-protein kinase DDB_G0267566 (844 aa).

2 ANK repeats span residues 335–367 (KGDT…NANI) and 371–400 (KHKV…KPFL). Residues 508 to 773 (SELGKLIGKG…FEVFQKLKKV (266 aa)) form the Protein kinase domain. ATP-binding positions include 514–522 (IGKGANGKV) and lysine 539. Aspartate 634 functions as the Proton acceptor in the catalytic mechanism.

It belongs to the protein kinase superfamily. Ser/Thr protein kinase family.

The catalysed reaction is L-seryl-[protein] + ATP = O-phospho-L-seryl-[protein] + ADP + H(+). It carries out the reaction L-threonyl-[protein] + ATP = O-phospho-L-threonyl-[protein] + ADP + H(+). The protein is Probable serine/threonine-protein kinase DDB_G0267566 of Dictyostelium discoideum (Social amoeba).